Consider the following 466-residue polypeptide: Uronate isomerase (466 aa).

Belongs to the metallo-dependent hydrolases superfamily. Uronate isomerase family.

It catalyses the reaction D-glucuronate = D-fructuronate. The enzyme catalyses aldehydo-D-galacturonate = keto-D-tagaturonate. It participates in carbohydrate metabolism; pentose and glucuronate interconversion. The sequence is that of Uronate isomerase from Clostridium perfringens (strain 13 / Type A).